Here is a 367-residue protein sequence, read N- to C-terminus: MKKVCALALSILTTIGATAADSAWAAQTSVHLYNWYDFIAPETPKAFQKETGTRVVLDTFDSAETAQGKLMVGRSGYDVVVITSNILPGLIKAGVLQELDRDRLPHWKNLDADILGKLQANDPGNRYAVPYLWGTTGIAYDVDKVRKLLGPDAPVDSWDLVFKEENISRLSQCGVATLDSSTELVSIALNYLGLPHNSQNPEDYQKAQELLLKVRPYIRYFDSSRVDTDLSNGNVCVVVGWQGTAYMAQVNNEQAGNGRHIAYSIPREGSLVWAENMVLLKDAPHPQQGYALIDYLLRPEVIARTSNYVGYPNGNQAALPLVERKLRENPAVYLSKETMATLFPLETLPLKVERIRTRVWSRVKTGS.

A signal peptide spans 1 to 19 (MKKVCALALSILTTIGATA).

Belongs to the bacterial solute-binding protein 1 family.

The protein localises to the periplasm. Its function is as follows. Binds putrescine and agmatine. This chain is Putrescine/agmatine-binding protein, found in Pseudomonas aeruginosa (strain ATCC 15692 / DSM 22644 / CIP 104116 / JCM 14847 / LMG 12228 / 1C / PRS 101 / PAO1).